The sequence spans 510 residues: Olfactomedin-4 (510 aa).

A signal peptide spans 1–20 (MRPGLSFLLALLFFLGQAAG). Asn72 and Asn136 each carry an N-linked (GlcNAc...) asparagine glycan. The stretch at 155 to 234 (DFELIKVEVK…ECEASKDQNT (80 aa)) forms a coiled coil. The 263-residue stretch at 245–507 (SCGHGGVVNI…LLNYDLSVLQ (263 aa)) folds into the Olfactomedin-like domain. Cys246 and Cys437 are oxidised to a cystine. N-linked (GlcNAc...) asparagine glycosylation occurs at Asn253.

As to quaternary structure, homomultimer; disulfide-linked. Interacts with NDUFA13. Interacts with cell surface lectins (locutions ricinus communis agglutinin I, concanavalin-A and wheat germ agglutinin) and cadherin. Post-translationally, N-glycosylated. Expressed during myeloid lineage development. Much higher expression in bone marrow neutrophils than in peripheral blood neutrophils (at protein level). Strongly expressed in the prostate, small intestine and colon and moderately expressed in the bone marrow and stomach. Overexpressed in some pancreatic cancer tissues.

It is found in the secreted. The protein localises to the extracellular space. It localises to the mitochondrion. Functionally, may promote proliferation of pancreatic cancer cells by favoring the transition from the S to G2/M phase. In myeloid leukemic cell lines, inhibits cell growth and induces cell differentiation and apoptosis. May play a role in the inhibition of EIF4EBP1 phosphorylation/deactivation. Facilitates cell adhesion, most probably through interaction with cell surface lectins and cadherin. The protein is Olfactomedin-4 (OLFM4) of Homo sapiens (Human).